We begin with the raw amino-acid sequence, 377 residues long: Chaperone protein DnaJ (377 aa).

Positions 5–69 (EYYDRLGVSK…QKRAAYDQYG (65 aa)) constitute a J domain. The CR-type zinc-finger motif lies at 133-215 (GTEKEVHYNR…CHGTGHEKQS (83 aa)). Zn(2+) is bound by residues cysteine 146, cysteine 149, cysteine 163, cysteine 166, cysteine 189, cysteine 192, cysteine 203, and cysteine 206. CXXCXGXG motif repeat units follow at residues 146 to 153 (CHTCNGSG), 163 to 170 (CSKCHGSG), 189 to 196 (CDVCHGTG), and 203 to 210 (CPTCHGTG).

The protein belongs to the DnaJ family. Homodimer. Zn(2+) serves as cofactor.

It is found in the cytoplasm. In terms of biological role, participates actively in the response to hyperosmotic and heat shock by preventing the aggregation of stress-denatured proteins and by disaggregating proteins, also in an autonomous, DnaK-independent fashion. Unfolded proteins bind initially to DnaJ; upon interaction with the DnaJ-bound protein, DnaK hydrolyzes its bound ATP, resulting in the formation of a stable complex. GrpE releases ADP from DnaK; ATP binding to DnaK triggers the release of the substrate protein, thus completing the reaction cycle. Several rounds of ATP-dependent interactions between DnaJ, DnaK and GrpE are required for fully efficient folding. Also involved, together with DnaK and GrpE, in the DNA replication of plasmids through activation of initiation proteins. In Streptococcus mutans serotype c (strain ATCC 700610 / UA159), this protein is Chaperone protein DnaJ.